Here is a 471-residue protein sequence, read N- to C-terminus: MENFKHLPEPFRIRVIEPVKRTTRAYREEAIIKSGMNPFLLDSEDVFIDLLTDSGTGAVTQSMQAAMMRGDEAYSGSRSYYALAESVKNIFGYQYTIPTHQGRGAEQIYIPVLIKKREQEKGLDRSKMVAFSNYFFDTTQGHSQINGCTVRNVYIKEAFDTGVRYDFKGNFDLEGLERGIEEVGPNNVPYIVATITSNSAGGQPVSLANLKAMYSIAKKYDIPVVMDSARFAENAYFIKQREAEYKDWTIEQITRETYKYADMLAMSAKKDAMVPMGGLLCVKDDSFFDVYTECRTLCVVQEGFPTYGGLEGGAMERLAVGLYDGMNLDWLAYRIAQVQYLVDGLEEIGVVCQQAGGHAAFVDAGKLLPHIPADQFPAQALACELYKVAGIRAVEIGSFLLGRDPKTGKQLPCPAELLRLTIPRATYTQTHMDFIIEAFKHVKENAANIKGLTFTYEPKVLRHFTAKLKEV.

N6-acetyllysine is present on residues Lys5, Lys115, and Lys156. Residue Lys270 is modified to N6-(pyridoxal phosphate)lysine. Position 450 is an N6-acetyllysine (Lys450).

The protein belongs to the beta-eliminating lyase family. As to quaternary structure, homotetramer. The cofactor is pyridoxal 5'-phosphate.

The catalysed reaction is L-tryptophan + H2O = indole + pyruvate + NH4(+). It participates in amino-acid degradation; L-tryptophan degradation via pyruvate pathway; indole and pyruvate from L-tryptophan: step 1/1. This chain is Tryptophanase, found in Escherichia coli (strain SMS-3-5 / SECEC).